Consider the following 630-residue polypeptide: Chaperone protein HtpG (630 aa).

Residues 1–339 (MSHTETHAFQ…SNDLPLNVSR (339 aa)) form an a; substrate-binding region. The b stretch occupies residues 340–556 (EILQSNRVVD…EGDISAHMAR (217 aa)). Residues 557-630 (MMEQMGQAMP…RMNALLSEVI (74 aa)) are c.

Belongs to the heat shock protein 90 family. In terms of assembly, homodimer.

Its subcellular location is the cytoplasm. Functionally, molecular chaperone. Has ATPase activity. In Hydrogenovibrio crunogenus (strain DSM 25203 / XCL-2) (Thiomicrospira crunogena), this protein is Chaperone protein HtpG.